Here is a 327-residue protein sequence, read N- to C-terminus: Undecaprenyl-phosphate 4-deoxy-4-formamido-L-arabinose transferase (327 aa).

Helical transmembrane passes span L236 to V256 and V270 to L290.

The protein belongs to the glycosyltransferase 2 family.

The protein resides in the cell inner membrane. The enzyme catalyses UDP-4-deoxy-4-formamido-beta-L-arabinose + di-trans,octa-cis-undecaprenyl phosphate = 4-deoxy-4-formamido-alpha-L-arabinopyranosyl di-trans,octa-cis-undecaprenyl phosphate + UDP. It functions in the pathway glycolipid biosynthesis; 4-amino-4-deoxy-alpha-L-arabinose undecaprenyl phosphate biosynthesis; 4-amino-4-deoxy-alpha-L-arabinose undecaprenyl phosphate from UDP-4-deoxy-4-formamido-beta-L-arabinose and undecaprenyl phosphate: step 1/2. Its pathway is bacterial outer membrane biogenesis; lipopolysaccharide biosynthesis. In terms of biological role, catalyzes the transfer of 4-deoxy-4-formamido-L-arabinose from UDP to undecaprenyl phosphate. The modified arabinose is attached to lipid A and is required for resistance to polymyxin and cationic antimicrobial peptides. The sequence is that of Undecaprenyl-phosphate 4-deoxy-4-formamido-L-arabinose transferase from Klebsiella pneumoniae (strain 342).